The primary structure comprises 317 residues: Melanocyte-stimulating hormone receptor (317 aa).

The interval M1 to P26 is disordered. The Extracellular portion of the chain corresponds to M1 to E37. N29 is a glycosylation site (N-linked (GlcNAc...) asparagine). A helical membrane pass occupies residues V38–I63. The Cytoplasmic segment spans residues A64 to P72. Residues M73 to L93 traverse the membrane as a helical segment. Residues E94–N118 are Extracellular-facing. Residues V119–M140 form a helical membrane-spanning segment. Residues D141–R163 lie on the Cytoplasmic side of the membrane. A helical membrane pass occupies residues A164–C183. At D184–C191 the chain is on the extracellular side. The helical transmembrane segment at L192–L211 threads the bilayer. Residues T212–A240 lie on the Cytoplasmic side of the membrane. The chain crosses the membrane as a helical span at residues A241–V266. At C267–N279 the chain is on the extracellular side. The helical transmembrane segment at F280 to F300 threads the bilayer. Residues R301 to W317 are Cytoplasmic-facing.

This sequence belongs to the G-protein coupled receptor 1 family. In terms of assembly, interacts with MGRN1, but does not undergo MGRN1-mediated ubiquitination; this interaction competes with GNAS-binding and thus inhibits agonist-induced cAMP production. Interacts with OPN3; the interaction results in a decrease in MC1R-mediated cAMP signaling and ultimately a decrease in melanin production in melanocytes.

It localises to the cell membrane. In terms of biological role, receptor for MSH (alpha, beta and gamma) and ACTH. The activity of this receptor is mediated by G proteins which activate adenylate cyclase. Mediates melanogenesis, the production of eumelanin (black/brown) and phaeomelanin (red/yellow), via regulation of cAMP signaling in melanocytes. This is Melanocyte-stimulating hormone receptor (MC1R) from Hapalemur griseus (Gray gentle lemur).